Reading from the N-terminus, the 284-residue chain is NAD kinase (284 aa).

Catalysis depends on D61, which acts as the Proton acceptor. NAD(+)-binding positions include 61 to 62 (DG), R66, 136 to 137 (ND), R147, K164, D166, and L201.

This sequence belongs to the NAD kinase family. The cofactor is a divalent metal cation.

The protein localises to the cytoplasm. The catalysed reaction is NAD(+) + ATP = ADP + NADP(+) + H(+). Involved in the regulation of the intracellular balance of NAD and NADP, and is a key enzyme in the biosynthesis of NADP. Catalyzes specifically the phosphorylation on 2'-hydroxyl of the adenosine moiety of NAD to yield NADP. The protein is NAD kinase of Dehalococcoides mccartyi (strain ATCC BAA-2100 / JCM 16839 / KCTC 5957 / BAV1).